A 444-amino-acid chain; its full sequence is Ribosomal protein uS12 methylthiotransferase RimO (444 aa).

In terms of domain architecture, MTTase N-terminal spans 2 to 118 (LKIALESLGC…IDKILKELSE (117 aa)). Residues cysteine 11, cysteine 47, cysteine 81, cysteine 155, cysteine 159, and cysteine 162 each coordinate [4Fe-4S] cluster. Residues 141–371 (STPSYMAYLK…MMIQQKISEE (231 aa)) enclose the Radical SAM core domain. Positions 374–441 (DKKIGKTYEV…EYDLMGDVLY (68 aa)) constitute a TRAM domain.

This sequence belongs to the methylthiotransferase family. RimO subfamily. [4Fe-4S] cluster is required as a cofactor.

The protein localises to the cytoplasm. It catalyses the reaction L-aspartate(89)-[ribosomal protein uS12]-hydrogen + (sulfur carrier)-SH + AH2 + 2 S-adenosyl-L-methionine = 3-methylsulfanyl-L-aspartate(89)-[ribosomal protein uS12]-hydrogen + (sulfur carrier)-H + 5'-deoxyadenosine + L-methionine + A + S-adenosyl-L-homocysteine + 2 H(+). In terms of biological role, catalyzes the methylthiolation of an aspartic acid residue of ribosomal protein uS12. In Clostridioides difficile (strain 630) (Peptoclostridium difficile), this protein is Ribosomal protein uS12 methylthiotransferase RimO.